Consider the following 388-residue polypeptide: Succinate--CoA ligase [ADP-forming] subunit beta (388 aa).

The ATP-grasp domain occupies Lys-9 to His-244. Residues Lys-46, Gly-53–Gly-55, Glu-99, Thr-102, and Glu-107 contribute to the ATP site. Residues Asn-199 and Asp-213 each contribute to the Mg(2+) site. Substrate-binding positions include Asn-264 and Gly-321–Val-323.

It belongs to the succinate/malate CoA ligase beta subunit family. Heterotetramer of two alpha and two beta subunits. It depends on Mg(2+) as a cofactor.

It carries out the reaction succinate + ATP + CoA = succinyl-CoA + ADP + phosphate. The enzyme catalyses GTP + succinate + CoA = succinyl-CoA + GDP + phosphate. It functions in the pathway carbohydrate metabolism; tricarboxylic acid cycle; succinate from succinyl-CoA (ligase route): step 1/1. Its function is as follows. Succinyl-CoA synthetase functions in the citric acid cycle (TCA), coupling the hydrolysis of succinyl-CoA to the synthesis of either ATP or GTP and thus represents the only step of substrate-level phosphorylation in the TCA. The beta subunit provides nucleotide specificity of the enzyme and binds the substrate succinate, while the binding sites for coenzyme A and phosphate are found in the alpha subunit. In Pseudomonas entomophila (strain L48), this protein is Succinate--CoA ligase [ADP-forming] subunit beta.